Consider the following 152-residue polypeptide: Leukocyte-associated immunoglobulin-like receptor 2 (152 aa).

The N-terminal stretch at 1 to 21 (MSPHLTALLGLVLCLAQTIHT) is a signal peptide. Residues 29-117 (PSISAEPGTV…GWSEHSDFLE (89 aa)) enclose the Ig-like C2-type domain. The cysteines at positions 49 and 101 are disulfide-linked. The tract at residues 120-152 (VKESSGGPDSPDTEPGSSAGTVPGTEASGFDAP) is disordered.

It localises to the secreted. This Homo sapiens (Human) protein is Leukocyte-associated immunoglobulin-like receptor 2 (LAIR2).